The sequence spans 316 residues: Ribosomal RNA small subunit methyltransferase H (316 aa).

S-adenosyl-L-methionine-binding positions include 35–37 (SGH), aspartate 55, phenylalanine 84, aspartate 105, and glutamine 112.

Belongs to the methyltransferase superfamily. RsmH family.

The protein localises to the cytoplasm. It carries out the reaction cytidine(1402) in 16S rRNA + S-adenosyl-L-methionine = N(4)-methylcytidine(1402) in 16S rRNA + S-adenosyl-L-homocysteine + H(+). Specifically methylates the N4 position of cytidine in position 1402 (C1402) of 16S rRNA. The polypeptide is Ribosomal RNA small subunit methyltransferase H (Streptococcus dysgalactiae subsp. equisimilis (strain GGS_124)).